The primary structure comprises 156 residues: MSRRHRAEKREINPDPKFGDLVVTKFMNAIMLHGKKSVAESIVYGAFDAVQSKLKQEPVTVFHSALDNIAPHVEVRSRRVGGATYQVPVDVRPERRQALAIRWLIAAARKRNETTMVDRLCGELMDAANNRGSAVKKREDTHKMADANRAFSHYRW.

Belongs to the universal ribosomal protein uS7 family. In terms of assembly, part of the 30S ribosomal subunit. Contacts proteins S9 and S11.

In terms of biological role, one of the primary rRNA binding proteins, it binds directly to 16S rRNA where it nucleates assembly of the head domain of the 30S subunit. Is located at the subunit interface close to the decoding center, probably blocks exit of the E-site tRNA. This chain is Small ribosomal subunit protein uS7, found in Sinorhizobium medicae (strain WSM419) (Ensifer medicae).